We begin with the raw amino-acid sequence, 72 residues long: Large ribosomal subunit protein bL31c (72 aa).

The protein belongs to the bacterial ribosomal protein bL31 family. Type A subfamily. As to quaternary structure, part of the 50S ribosomal subunit.

It is found in the plastid. The protein localises to the chloroplast. Functionally, binds the 23S rRNA. This chain is Large ribosomal subunit protein bL31c (rpl31), found in Phaeodactylum tricornutum (strain CCAP 1055/1).